We begin with the raw amino-acid sequence, 676 residues long: Zinc finger protein 418 (676 aa).

One can recognise a KRAB domain in the interval Val5–Leu91. 16 consecutive C2H2-type zinc fingers follow at residues His82–His105, Cys230–His252, Tyr258–His280, Tyr286–His308, Tyr314–His336, Tyr342–His364, Tyr370–His392, Tyr398–His420, Tyr426–His448, Tyr454–His476, Tyr482–His504, Phe510–His532, Tyr538–His560, Tyr591–His613, Tyr619–His641, and Tyr647–His669.

It belongs to the krueppel C2H2-type zinc-finger protein family. As to expression, highly expressed in heart.

It is found in the nucleus. In terms of biological role, transcriptional repressor. May play a role as regulator of the ubiquitin-proteasome system and autophagy-lysosomal pathway. The sequence is that of Zinc finger protein 418 (ZNF418) from Homo sapiens (Human).